The sequence spans 984 residues: Probable beta-galactosidase C (984 aa).

The first 23 residues, 1–23, serve as a signal peptide directing secretion; the sequence is MRLLSFIYLVWLALLTGTPQVSA. Residues tyrosine 82, asparagine 127, alanine 128, glutamate 129, and asparagine 187 each contribute to the substrate site. Residue glutamate 188 is the Proton donor of the active site. Asparagine 197 carries N-linked (GlcNAc...) asparagine glycosylation. Tyrosine 251 lines the substrate pocket. A disulfide bond links cysteine 257 and cysteine 304. A glycan (N-linked (GlcNAc...) asparagine) is linked at asparagine 276. The active-site Nucleophile is glutamate 287. Tyrosine 353 lines the substrate pocket. N-linked (GlcNAc...) asparagine glycans are attached at residues asparagine 391, asparagine 421, asparagine 434, asparagine 517, asparagine 602, asparagine 677, asparagine 715, asparagine 720, asparagine 759, and asparagine 805.

Belongs to the glycosyl hydrolase 35 family.

It is found in the secreted. It catalyses the reaction Hydrolysis of terminal non-reducing beta-D-galactose residues in beta-D-galactosides.. Functionally, cleaves beta-linked terminal galactosyl residues from gangliosides, glycoproteins, and glycosaminoglycans. In Aspergillus oryzae (strain ATCC 42149 / RIB 40) (Yellow koji mold), this protein is Probable beta-galactosidase C (lacC).